Consider the following 361-residue polypeptide: MSLPHFDPSHYDAQLADKQARLSGLLAPFAAPEPEVFDSPREHYRLRAEFRLWREGEARHYAMFDPGDKRKPILLDDFPIASERINDLMPRLKAAWENAALGFKLFQVEFLTTLAGDALITLCYHRPLDTFWQTAAERLAAELGVSIVGRSRGQRLVVGRDYVEEELEVAGRRFRYRQPEGAFTQPNGVVCRKMLNWAHDVLGERDDDLLELYCGNGNFTLPLATRVRRVLATEISKTSVNAALTNLESNGVDNVTLVRLSAEELTQALNEVRPFRRLAGVDLKGYDFGSLFVDPPRAGMDPDTCELARRFGRILYISCNPETLAANIARLHDTHRVVRCALFDQFPYTHHMESGVLLERR.

S-adenosyl-L-methionine-binding residues include Q185, Y213, N218, E234, and D294. The Nucleophile role is filled by C319. The active-site Proton acceptor is E353.

Belongs to the class I-like SAM-binding methyltransferase superfamily. RNA M5U methyltransferase family. TrmA subfamily.

The catalysed reaction is uridine(54) in tRNA + S-adenosyl-L-methionine = 5-methyluridine(54) in tRNA + S-adenosyl-L-homocysteine + H(+). It catalyses the reaction uridine(341) in tmRNA + S-adenosyl-L-methionine = 5-methyluridine(341) in tmRNA + S-adenosyl-L-homocysteine + H(+). Functionally, dual-specificity methyltransferase that catalyzes the formation of 5-methyluridine at position 54 (m5U54) in all tRNAs, and that of position 341 (m5U341) in tmRNA (transfer-mRNA). This chain is tRNA/tmRNA (uracil-C(5))-methyltransferase, found in Azotobacter vinelandii (strain DJ / ATCC BAA-1303).